The sequence spans 253 residues: Patatin-like phospholipase domain-containing protein 4 (253 aa).

In terms of domain architecture, PNPLA spans leucine 6–glycine 176. Positions glycine 41 to glycine 45 match the GXSXG motif. The active-site Nucleophile is serine 43. The active-site Proton acceptor is aspartate 163. The DGA/G signature appears at aspartate 163–glycine 165.

As to expression, expressed in all tissues examined, including heart, brain, placenta, lung, liver, muscle, kidney, pancreas and spleen.

Its subcellular location is the mitochondrion. The enzyme catalyses a triacylglycerol + H2O = a diacylglycerol + a fatty acid + H(+). The catalysed reaction is a 1,2-diacyl-sn-glycero-3-phosphocholine + H2O = a 1-acyl-sn-glycero-3-phosphocholine + a fatty acid + H(+). It catalyses the reaction an all-trans-retinyl ester + H2O = all-trans-retinol + a fatty acid + H(+). It carries out the reaction 2 a 1-acylglycerol = a 1,2-diacylglycerol + glycerol. The enzyme catalyses a 1-acylglycerol + a 1,2-diacylglycerol = a triacylglycerol + glycerol. The catalysed reaction is a 1-acylglycerol + a 1,3-diacylglycerol = a triacylglycerol + glycerol. It catalyses the reaction a triacylglycerol + H2O = a 1,2-diacylglycerol + a fatty acid + H(+). It carries out the reaction a triacylglycerol + H2O = a 1,3-diacylglycerol + a fatty acid + H(+). The enzyme catalyses a triacylglycerol + all-trans-retinol = an all-trans-retinyl ester + a diacylglycerol. The catalysed reaction is 2 1-(9Z-octadecenoyl)-glycerol = 1,2-di-(9Z-octadecenoyl)-glycerol + glycerol. It catalyses the reaction 1-(9Z-octadecenoyl)-glycerol + 1,2-di-(9Z-octadecenoyl)-glycerol = 1,2,3-tri-(9Z-octadecenoyl)-glycerol + glycerol. It carries out the reaction 1-(9Z-octadecenoyl)-glycerol + 1,3-di-(9Z-octadecenoyl)-glycerol = 1,2,3-tri-(9Z-octadecenoyl)-glycerol + glycerol. The enzyme catalyses 1,2-di-(9Z-octadecenoyl)-glycerol + (9Z)-octadecenoate + H(+) = 1,2,3-tri-(9Z-octadecenoyl)-glycerol + H2O. The catalysed reaction is 1,2,3-tri-(9Z-octadecenoyl)-glycerol + H2O = 1,3-di-(9Z-octadecenoyl)-glycerol + (9Z)-octadecenoate + H(+). It catalyses the reaction all-trans-retinyl hexadecanoate + H2O = all-trans-retinol + hexadecanoate + H(+). It carries out the reaction 1,2,3-tri-(9Z-octadecenoyl)-glycerol + all-trans-retinol = all-trans-retinyl 9Z-octadecenoate + di-(9Z)-octadecenoylglycerol. The triglyceride lipase activity is inhibited by BEL ((E)-6-(bromomethylene)-3-(1-naphthalenyl)-2H-tetrahydropyran-2-one), a suicide substrate inhibitor. Its function is as follows. Has abundant triacylglycerol lipase activity. Transfers fatty acid from triglyceride to retinol, hydrolyzes retinylesters, and generates 1,3-diacylglycerol from triglycerides. Additionally possesses acylglycerol transacylase and phospholipase A2 activities. This Homo sapiens (Human) protein is Patatin-like phospholipase domain-containing protein 4.